The primary structure comprises 824 residues: Acyl-homoserine lactone acylase QuiP (824 aa).

Positions 1–26 (MASPALRHFLPRFGAAAAAASFLSLA) are cleaved as a signal peptide. The active-site Nucleophile is the Ser-264.

The protein belongs to the peptidase S45 family. In terms of assembly, heterodimer of an alpha subunit and a beta subunit processed from the same precursor.

Its subcellular location is the periplasm. It carries out the reaction an N-acyl-L-homoserine lactone + H2O = L-homoserine lactone + a carboxylate. Functionally, catalyzes the deacylation of acyl-homoserine lactone (AHL or acyl-HSL), releasing homoserine lactone (HSL) and the corresponding fatty acid. Possesses a specificity for the degradation of long-chain acyl-HSLs (side chains of seven or more carbons in length). This Pseudomonas syringae pv. tomato (strain ATCC BAA-871 / DC3000) protein is Acyl-homoserine lactone acylase QuiP (quiP).